Here is a 146-residue protein sequence, read N- to C-terminus: Nuclear export protein (146 aa).

Interacts with host HSC70.

The protein localises to the host cytoplasm. In terms of biological role, may mediate the nuclear export of encapsidated genomic RNAs (ribonucleoproteins, RNPs). Interaction of viral NEP with M1-Hsc70 is thought to promote nuclear export of the viral encapsidated genomes. The chain is Nuclear export protein from Infectious salmon anemia virus (isolate Atlantic salmon/Norway/810/9/99) (ISAV).